The following is an 818-amino-acid chain: Phosphoenolpyruvate synthase (818 aa).

Catalysis depends on histidine 442, which acts as the Tele-phosphohistidine intermediate. 7 residues coordinate substrate: arginine 532, arginine 601, glutamate 703, glycine 724, serine 725, asparagine 726, and aspartate 727. A Mg(2+)-binding site is contributed by glutamate 703. Aspartate 727 is a Mg(2+) binding site. The Proton donor role is filled by cysteine 774.

Belongs to the PEP-utilizing enzyme family. The cofactor is Mg(2+).

It carries out the reaction pyruvate + ATP + H2O = phosphoenolpyruvate + AMP + phosphate + 2 H(+). It functions in the pathway carbohydrate biosynthesis; gluconeogenesis. Its function is as follows. Catalyzes the phosphorylation of pyruvate to phosphoenolpyruvate. This Synechocystis sp. (strain ATCC 27184 / PCC 6803 / Kazusa) protein is Phosphoenolpyruvate synthase (ppsA).